We begin with the raw amino-acid sequence, 246 residues long: 1-(5-phosphoribosyl)-5-[(5-phosphoribosylamino)methylideneamino] imidazole-4-carboxamide isomerase (246 aa).

The Proton acceptor role is filled by Asp10. Asp131 acts as the Proton donor in catalysis.

The protein belongs to the HisA/HisF family.

Its subcellular location is the cytoplasm. It catalyses the reaction 1-(5-phospho-beta-D-ribosyl)-5-[(5-phospho-beta-D-ribosylamino)methylideneamino]imidazole-4-carboxamide = 5-[(5-phospho-1-deoxy-D-ribulos-1-ylimino)methylamino]-1-(5-phospho-beta-D-ribosyl)imidazole-4-carboxamide. It participates in amino-acid biosynthesis; L-histidine biosynthesis; L-histidine from 5-phospho-alpha-D-ribose 1-diphosphate: step 4/9. This chain is 1-(5-phosphoribosyl)-5-[(5-phosphoribosylamino)methylideneamino] imidazole-4-carboxamide isomerase, found in Acidiphilium cryptum (strain JF-5).